The following is a 130-amino-acid chain: Small ribosomal subunit protein uS9 (130 aa).

Residues 105-130 (TRDPRMKERKKYGLKGARRAPQFSKR) are disordered. Basic residues predominate over residues 111–130 (KERKKYGLKGARRAPQFSKR).

The protein belongs to the universal ribosomal protein uS9 family.

In Bacillus pumilus (strain SAFR-032), this protein is Small ribosomal subunit protein uS9.